Reading from the N-terminus, the 319-residue chain is Transmembrane and ubiquitin-like domain-containing protein 2 (319 aa).

Residues Val36–Thr56 traverse the membrane as a helical segment. Disordered stretches follow at residues Val88–Glu130 and Gln146–Cys165. Basic and acidic residues predominate over residues Pro95–Glu111. The Ubiquitin-like domain occupies Ile173–Ala246. 2 helical membrane passes run Leu264–Trp284 and Phe293–Val313.

It localises to the membrane. This Rattus norvegicus (Rat) protein is Transmembrane and ubiquitin-like domain-containing protein 2 (Tmub2).